The sequence spans 248 residues: Pyridoxine 5'-phosphate synthase (248 aa).

Residue asparagine 12 coordinates 3-amino-2-oxopropyl phosphate. Position 14–15 (14–15) interacts with 1-deoxy-D-xylulose 5-phosphate; that stretch reads DH. Arginine 23 serves as a coordination point for 3-amino-2-oxopropyl phosphate. The Proton acceptor role is filled by histidine 48. Positions 50 and 55 each coordinate 1-deoxy-D-xylulose 5-phosphate. The active-site Proton acceptor is glutamate 75. Residue threonine 105 participates in 1-deoxy-D-xylulose 5-phosphate binding. The active-site Proton donor is the histidine 196. Residues glycine 197 and 218–219 contribute to the 3-amino-2-oxopropyl phosphate site; that span reads GH.

Belongs to the PNP synthase family. As to quaternary structure, homooctamer; tetramer of dimers.

Its subcellular location is the cytoplasm. It carries out the reaction 3-amino-2-oxopropyl phosphate + 1-deoxy-D-xylulose 5-phosphate = pyridoxine 5'-phosphate + phosphate + 2 H2O + H(+). It functions in the pathway cofactor biosynthesis; pyridoxine 5'-phosphate biosynthesis; pyridoxine 5'-phosphate from D-erythrose 4-phosphate: step 5/5. Its function is as follows. Catalyzes the complicated ring closure reaction between the two acyclic compounds 1-deoxy-D-xylulose-5-phosphate (DXP) and 3-amino-2-oxopropyl phosphate (1-amino-acetone-3-phosphate or AAP) to form pyridoxine 5'-phosphate (PNP) and inorganic phosphate. This chain is Pyridoxine 5'-phosphate synthase, found in Pseudomonas fluorescens (strain ATCC BAA-477 / NRRL B-23932 / Pf-5).